Reading from the N-terminus, the 476-residue chain is Probable secreted beta-glucosidase SIM1 (476 aa).

A signal peptide spans 1–19 (MKFSTAVTTLISSGAIVSA). Low complexity predominate over residues 111–203 (ATASTSQGAS…SSSSSSSGSG (93 aa)). The interval 111 to 214 (ATASTSQGAS…IYGDLADFSG (104 aa)) is disordered. N-linked (GlcNAc...) asparagine glycosylation is present at Asn-423.

This sequence belongs to the SUN family.

The protein localises to the secreted. Its subcellular location is the cell wall. Functionally, involved in the remodeling of the cell wall during the various phases of yeast culture development and under various environmental conditions. Required for the maintenance of the CLB5 kinase activity. The chain is Probable secreted beta-glucosidase SIM1 (SIM1) from Saccharomyces cerevisiae (strain ATCC 204508 / S288c) (Baker's yeast).